The following is a 102-amino-acid chain: Small ribosomal subunit protein uS10 (102 aa).

The protein belongs to the universal ribosomal protein uS10 family. In terms of assembly, part of the 30S ribosomal subunit.

Functionally, involved in the binding of tRNA to the ribosomes. The protein is Small ribosomal subunit protein uS10 of Opitutus terrae (strain DSM 11246 / JCM 15787 / PB90-1).